The chain runs to 101 residues: Venom protein 214 (101 aa).

The N-terminal stretch at 1-16 is a signal peptide; sequence MIRYVLVIITCFLVAA.

Post-translationally, contains 3 disulfide bonds. As to expression, expressed by the venom gland.

It is found in the secreted. The chain is Venom protein 214 from Lychas mucronatus (Chinese swimming scorpion).